A 446-amino-acid polypeptide reads, in one-letter code: Tubulin beta-1 chain (446 aa).

The short motif at 1–4 is the MREI motif element; that stretch reads MREI. Positions 11, 69, 138, 142, 143, 144, 204, and 226 each coordinate GTP. Glu69 is a binding site for Mg(2+). Residues 426–446 are disordered; that stretch reads QDATAEEEGEFEEEGEYEDGA. A compositionally biased stretch (acidic residues) spans 429 to 446; sequence TAEEEGEFEEEGEYEDGA. Glu438 carries the 5-glutamyl polyglutamate modification.

This sequence belongs to the tubulin family. Dimer of alpha and beta chains. A typical microtubule is a hollow water-filled tube with an outer diameter of 25 nm and an inner diameter of 15 nM. Alpha-beta heterodimers associate head-to-tail to form protofilaments running lengthwise along the microtubule wall with the beta-tubulin subunit facing the microtubule plus end conferring a structural polarity. Microtubules usually have 13 protofilaments but different protofilament numbers can be found in some organisms and specialized cells. It depends on Mg(2+) as a cofactor. Post-translationally, some glutamate residues at the C-terminus are polyglycylated, resulting in polyglycine chains on the gamma-carboxyl group. Glycylation is mainly limited to tubulin incorporated into axonemes (cilia and flagella) whereas glutamylation is prevalent in neuronal cells, centrioles, axonemes, and the mitotic spindle. Both modifications can coexist on the same protein on adjacent residues, and lowering polyglycylation levels increases polyglutamylation, and reciprocally. The precise function of polyglycylation is still unclear. In terms of processing, some glutamate residues at the C-terminus are polyglutamylated, resulting in polyglutamate chains on the gamma-carboxyl group. Polyglutamylation plays a key role in microtubule severing by spastin (SPAST). SPAST preferentially recognizes and acts on microtubules decorated with short polyglutamate tails: severing activity by SPAST increases as the number of glutamates per tubulin rises from one to eight, but decreases beyond this glutamylation threshold. Brain.

The protein resides in the cytoplasm. It localises to the cytoskeleton. In terms of biological role, tubulin is the major constituent of microtubules, a cylinder consisting of laterally associated linear protofilaments composed of alpha- and beta-tubulin heterodimers. Microtubules grow by the addition of GTP-tubulin dimers to the microtubule end, where a stabilizing cap forms. Below the cap, tubulin dimers are in GDP-bound state, owing to GTPase activity of alpha-tubulin. This chain is Tubulin beta-1 chain (tubb1), found in Notothenia neglecta (Yellowbelly rockcod).